The primary structure comprises 158 residues: Pyruvoyl-dependent arginine decarboxylase (158 aa).

Serine 44 bears the Pyruvic acid (Ser) mark.

The protein belongs to the PdaD family. Requires pyruvate as cofactor.

It catalyses the reaction L-arginine + H(+) = agmatine + CO2. The protein is Pyruvoyl-dependent arginine decarboxylase of Pyrococcus furiosus (strain ATCC 43587 / DSM 3638 / JCM 8422 / Vc1).